A 442-amino-acid polypeptide reads, in one-letter code: 3-phosphoshikimate 1-carboxyvinyltransferase (442 aa).

Residues K27, S28, and R32 each contribute to the 3-phosphoshikimate site. K27 provides a ligand contact to phosphoenolpyruvate. Residues G100 and R128 each coordinate phosphoenolpyruvate. 6 residues coordinate 3-phosphoshikimate: S174, S175, Q176, S204, D321, and K348. Position 176 (Q176) interacts with phosphoenolpyruvate. D321 serves as the catalytic Proton acceptor. The phosphoenolpyruvate site is built by R352, R394, and K424.

It belongs to the EPSP synthase family. As to quaternary structure, monomer.

Its subcellular location is the cytoplasm. It carries out the reaction 3-phosphoshikimate + phosphoenolpyruvate = 5-O-(1-carboxyvinyl)-3-phosphoshikimate + phosphate. It participates in metabolic intermediate biosynthesis; chorismate biosynthesis; chorismate from D-erythrose 4-phosphate and phosphoenolpyruvate: step 6/7. Functionally, catalyzes the transfer of the enolpyruvyl moiety of phosphoenolpyruvate (PEP) to the 5-hydroxyl of shikimate-3-phosphate (S3P) to produce enolpyruvyl shikimate-3-phosphate and inorganic phosphate. This is 3-phosphoshikimate 1-carboxyvinyltransferase from Herminiimonas arsenicoxydans.